A 152-amino-acid chain; its full sequence is MSGTVTMHSVFVYGSLMADDVVRLLLNRIPQTASATLPDFHRFSIKGRVYPAIIPAKSDKVSGKVLFGITDDELNVLDEFEDVEYERENVQVLLTDSSDEKLQTKTYVWAKKDDPDLYGTWDFEEWKQLHMEGFLKMTKEFAEELNLPKSEI.

13–18 (YGSLMA) contributes to the substrate binding site. The active-site Proton acceptor is the Glu-81.

It belongs to the gamma-glutamylcyclotransferase family. Expressed mainly in leaves.

Putative gamma-glutamylcyclotransferase. The polypeptide is AIG2-like protein D (Arabidopsis thaliana (Mouse-ear cress)).